An 83-amino-acid polypeptide reads, in one-letter code: Exodeoxyribonuclease 7 small subunit (83 aa).

It belongs to the XseB family. In terms of assembly, heterooligomer composed of large and small subunits.

It localises to the cytoplasm. The catalysed reaction is Exonucleolytic cleavage in either 5'- to 3'- or 3'- to 5'-direction to yield nucleoside 5'-phosphates.. In terms of biological role, bidirectionally degrades single-stranded DNA into large acid-insoluble oligonucleotides, which are then degraded further into small acid-soluble oligonucleotides. This is Exodeoxyribonuclease 7 small subunit from Rhodopseudomonas palustris (strain BisB5).